Here is a 289-residue protein sequence, read N- to C-terminus: CRISPR-associated endoribonuclease Cas6 2 (289 aa).

Belongs to the CRISPR-associated endoribonuclease Cas6 family. As to quaternary structure, possibly part of the aCascade ribonucleoprotein complex. It depends on Mg(2+) as a cofactor.

Its function is as follows. CRISPR (clustered regularly interspaced short palindromic repeat) is an adaptive immune system that provides protection against mobile genetic elements (viruses, transposable elements and conjugative plasmids). CRISPR clusters contain sequences complementary to antecedent mobile elements and target invading nucleic acids. CRISPR clusters are transcribed and processed into CRISPR RNA (crRNA). Functions as a ssRNA-specific endoribonuclease, generating an 8 base-long tag known as the 5' handle. In Saccharolobus solfataricus (strain ATCC 35092 / DSM 1617 / JCM 11322 / P2) (Sulfolobus solfataricus), this protein is CRISPR-associated endoribonuclease Cas6 2 (cas6b).